The chain runs to 1202 residues: Metabotropic glycine receptor (1202 aa).

An N-terminal signal peptide occupies residues Met1–Ala24. Positions Ser25–Ser62 are disordered. The Extracellular portion of the chain corresponds to Ser25–Arg417. A compositionally biased stretch (basic and acidic residues) spans Pro28 to Ser40. Residues Tyr85–Trp281 are cache-like region. N-linked (GlcNAc...) asparagine glycans are attached at residues Asn98 and Asn143. Cysteines 99 and 272 form a disulfide. Residues Ser172 and Arg173 each coordinate glycine. A glycan (N-linked (GlcNAc...) asparagine) is linked at Asn215. The tract at residues Leu234–Arg253 is disordered. Glu271 serves as a coordination point for glycine. Residue Asn274 is glycosylated (N-linked (GlcNAc...) asparagine). Position 307 (Asp307) interacts with glycine. N-linked (GlcNAc...) asparagine glycosylation is present at Asn333. A helical transmembrane segment spans residues Leu418 to Tyr439. Residues His440–Gly451 lie on the Cytoplasmic side of the membrane. A helical membrane pass occupies residues Leu452–Phe474. Residues Glu475–Thr478 are Extracellular-facing. A helical transmembrane segment spans residues Phe479 to Leu501. A disulfide bridge connects residues Cys481 and Cys573. At Lys502–Arg525 the chain is on the cytoplasmic side. Residues Val526–Ser547 traverse the membrane as a helical segment. At Met548 to Asp576 the chain is on the extracellular side. A helical transmembrane segment spans residues Arg577–Cys597. Topologically, residues Tyr598–Arg611 are cytoplasmic. A helical transmembrane segment spans residues Tyr612 to Val633. Topologically, residues Leu634–Trp642 are extracellular. Residues Met643 to Ile664 traverse the membrane as a helical segment. Over Pro665–Lys1202 the chain is Cytoplasmic. A phosphoserine mark is found at Ser694, Ser705, and Ser708. Disordered regions lie at residues Arg757–Leu899 and Leu914–Asp995. 2 stretches are compositionally biased toward basic and acidic residues: residues Cys769–Ala781 and Ser819–Thr828. Lys774 participates in a covalent cross-link: Glycyl lysine isopeptide (Lys-Gly) (interchain with G-Cter in ubiquitin). Over residues Glu845 to Lys856 the composition is skewed to low complexity. A Phosphoserine modification is found at Ser865. Positions Met925 to Arg943 are enriched in basic and acidic residues. Polar residues-rich tracts occupy residues Lys944–Asn958 and Gln975–Lys994. Ser946 carries the phosphoserine modification. A VCPWE motif 1 motif is present at residues Val1002–Glu1006. Ser1061 bears the Phosphoserine mark. The VCPWE motif 2 motif lies at Val1067–Glu1071. Ser1076 carries the post-translational modification Phosphoserine. Composition is skewed to polar residues over residues Gln1132–Val1144 and Cys1151–Thr1162. The tract at residues Gln1132 to Thr1162 is disordered. A VCPWE motif 3 motif is present at residues Val1167–Glu1171.

This sequence belongs to the G-protein coupled receptor 3 family. Homodimer. Associates with the RGS7-GNB5 complex, promoting its localization to the cell membrane and regulating its GTPase activator activity. Interacts (via VCPWE motifs) with GNAO1. Interacts with GPC4. Interacts with EGFLAM.

It is found in the cell membrane. The protein localises to the postsynaptic cell membrane. It localises to the presynaptic cell membrane. Its subcellular location is the nucleus. Metabotropic receptor for glycine that controls synapse formation and function in the brain. Acts as an atypical G-protein coupled receptor that recruits and regulates the RGS7-GNB5 complex instead of activating G proteins. In absence of glycine ligand, promotes the GTPase activator activity of RGS7, increasing the GTPase activity of G protein alpha subunits, thereby driving them into their inactive GDP-bound form. Glycine-binding changes the conformation of the intracellular surface, inhibiting the GTPase activator activity of the RGS7-GNB5 complex, promoting G protein alpha subunits into their active GTP-bound form and regulating cAMP levels. Also able to bind taurine, a compound closely related to glycine, but with a two-fold lower affinity. Glycine receptor-dependent regulation of cAMP controls key ion channels, kinases and neurotrophic factors involved in neuronal excitability and synaptic transmission. Plays a pivotal role in regulating mood and cognition via its ability to regulate neuronal excitability in L2/L3 pyramidal neurons of the prefrontal cortex. Also involved in spatial learning by regulating hippocampal CA1 neuronal excitability. Acts as a synaptic organizer in the hippocampus, required for proper mossy fiber-CA3 neurocircuitry establishment, structure and function: induces presynaptic differentiation in contacting axons via its interaction with GPC4. In addition to glycine, may also act as a receptor for osteocalcin (BGLAP) hormone: osteocalcin-binding initiates a signaling response that prevents neuronal apoptosis in the hippocampus and regulates the synthesis of neurotransmitters. In Rattus norvegicus (Rat), this protein is Metabotropic glycine receptor.